Here is a 372-residue protein sequence, read N- to C-terminus: 4-hydroxy-3-methylbut-2-en-1-yl diphosphate synthase (flavodoxin) (372 aa).

Residues Cys-270, Cys-273, Cys-305, and Glu-312 each contribute to the [4Fe-4S] cluster site.

It belongs to the IspG family. The cofactor is [4Fe-4S] cluster.

The catalysed reaction is (2E)-4-hydroxy-3-methylbut-2-enyl diphosphate + oxidized [flavodoxin] + H2O + 2 H(+) = 2-C-methyl-D-erythritol 2,4-cyclic diphosphate + reduced [flavodoxin]. It functions in the pathway isoprenoid biosynthesis; isopentenyl diphosphate biosynthesis via DXP pathway; isopentenyl diphosphate from 1-deoxy-D-xylulose 5-phosphate: step 5/6. Its function is as follows. Converts 2C-methyl-D-erythritol 2,4-cyclodiphosphate (ME-2,4cPP) into 1-hydroxy-2-methyl-2-(E)-butenyl 4-diphosphate. This chain is 4-hydroxy-3-methylbut-2-en-1-yl diphosphate synthase (flavodoxin), found in Escherichia coli O9:H4 (strain HS).